The primary structure comprises 587 residues: Nucleoporin p58/p45 (587 aa).

Repeat copies occupy residues Phe7–Gly8, Phe30–Gly31, Phe44–Gly45, Phe63–Gly64, and Phe68–Gly69. The tract at residues Phe7–Gly567 is 14 X 2 AA repeats of F-G. Residues Thr196–Pro236 form a disordered region. Residues Ser213–Asn234 are compositionally biased toward basic and acidic residues. Coiled coils occupy residues Glu244–Ser264 and Glu302–Thr369. Thr319 bears the Phosphothreonine mark. Repeat copies occupy residues Phe476–Gly477, Phe480–Gly481, Phe501–Gly502, Phe507–Gly508, Phe517–Gly518, Phe519–Gly520, Phe533–Gly534, Phe556–Gly557, and Phe566–Gly567. Residues Gly565–Arg587 are disordered.

Belongs to the NUP58 family. As to quaternary structure, component of the p62 complex, a complex at least composed of NUP62, NUP54, and NUP58. Interacts with NUTF2. Interacts with SRP1-alpha and Importin p97 proteins when they are together, but not with SRP1-alpha protein alone. O-glycosylated.

It is found in the nucleus. The protein resides in the nuclear pore complex. It localises to the nucleus membrane. Component of the nuclear pore complex, a complex required for the trafficking across the nuclear membrane. The chain is Nucleoporin p58/p45 from Mus musculus (Mouse).